Consider the following 259-residue polypeptide: Global transcriptional regulator CodY (259 aa).

The segment at 1 to 155 (MNLLEKTRKI…GATVVGMEIL (155 aa)) is GAF domain. The segment at residues 203–222 (ASKIADRVGITRSVIVNALR) is a DNA-binding region (H-T-H motif). A Phosphoserine modification is found at Ser215.

This sequence belongs to the CodY family.

It is found in the cytoplasm. DNA-binding global transcriptional regulator which is involved in the adaptive response to starvation and acts by directly or indirectly controlling the expression of numerous genes in response to nutrient availability. During rapid exponential growth, CodY is highly active and represses genes whose products allow adaptation to nutrient depletion. This is Global transcriptional regulator CodY from Geobacillus kaustophilus (strain HTA426).